Here is a 445-residue protein sequence, read N- to C-terminus: Exodeoxyribonuclease 7 large subunit (445 aa).

It belongs to the XseA family. Heterooligomer composed of large and small subunits.

Its subcellular location is the cytoplasm. The catalysed reaction is Exonucleolytic cleavage in either 5'- to 3'- or 3'- to 5'-direction to yield nucleoside 5'-phosphates.. Bidirectionally degrades single-stranded DNA into large acid-insoluble oligonucleotides, which are then degraded further into small acid-soluble oligonucleotides. In Nautilia profundicola (strain ATCC BAA-1463 / DSM 18972 / AmH), this protein is Exodeoxyribonuclease 7 large subunit.